The following is a 130-amino-acid chain: Histone H2A type 1 (130 aa).

Residues 1–22 (MSGRGKQGGKARAKAKTRSSRA) are disordered. At serine 2 the chain carries N-acetylserine. At serine 2 the chain carries Phosphoserine; by RPS6KA5. A Citrulline; alternate modification is found at arginine 4. The residue at position 4 (arginine 4) is a Symmetric dimethylarginine; by PRMT5; alternate. Lysine 6 carries the post-translational modification N6-(2-hydroxyisobutyryl)lysine. Basic residues predominate over residues 7–19 (QGGKARAKAKTRS). Position 10 is an N6-(2-hydroxyisobutyryl)lysine; alternate (lysine 10). Position 10 is an N6-lactoyllysine; alternate (lysine 10). Residue lysine 10 is modified to N6-succinyllysine; alternate. Residues lysine 14 and lysine 16 each participate in a glycyl lysine isopeptide (Lys-Gly) (interchain with G-Cter in ubiquitin) cross-link. Position 37 is an N6-(2-hydroxyisobutyryl)lysine; alternate (lysine 37). At lysine 37 the chain carries N6-(beta-hydroxybutyryl)lysine; alternate. Lysine 37 bears the N6-crotonyllysine; alternate mark. An N6-(2-hydroxyisobutyryl)lysine mark is found at lysine 75 and lysine 76. Lysine 96 is subject to N6-(2-hydroxyisobutyryl)lysine; alternate. Lysine 96 bears the N6-succinyllysine; alternate mark. At lysine 96 the chain carries N6-glutaryllysine; alternate. Lysine 100 carries the N6-glutaryllysine modification. Glutamine 105 carries the post-translational modification N5-methylglutamine. Lysine 119 bears the N6-(2-hydroxyisobutyryl)lysine; alternate mark. Lysine 119 and lysine 120 each carry N6-crotonyllysine; alternate. Residues lysine 119 and lysine 120 each carry the N6-glutaryllysine; alternate modification. Lysine 120 participates in a covalent cross-link: Glycyl lysine isopeptide (Lys-Gly) (interchain with G-Cter in ubiquitin); alternate. The residue at position 121 (threonine 121) is a Phosphothreonine; by DCAF1. An N6-crotonyllysine; alternate modification is found at lysine 126. Lysine 126 bears the N6-glutaryllysine; alternate mark.

Belongs to the histone H2A family. In terms of assembly, the nucleosome is a histone octamer containing two molecules each of H2A, H2B, H3 and H4 assembled in one H3-H4 heterotetramer and two H2A-H2B heterodimers. The octamer wraps approximately 147 bp of DNA. Interacts with VRK1; the interaction is mediated by the nucleosome acidic patch, a cluster of negatively charged residues of H2A and H2B forming a cleft within the nucleosome core. In terms of processing, deiminated on Arg-4 in granulocytes upon calcium entry. Monoubiquitination of Lys-120 (H2AK119Ub) by RING1, TRIM37 and RNF2/RING2 complex gives a specific tag for epigenetic transcriptional repression and participates in X chromosome inactivation of female mammals. It is involved in the initiation of both imprinted and random X inactivation. Ubiquitinated H2A is enriched in inactive X chromosome chromatin. Ubiquitination of H2A functions downstream of methylation of 'Lys-27' of histone H3 (H3K27me). H2AK119Ub by RNF2/RING2 can also be induced by ultraviolet and may be involved in DNA repair. Following DNA double-strand breaks (DSBs), it is ubiquitinated through 'Lys-63' linkage of ubiquitin moieties by the E2 ligase UBE2N and the E3 ligases RNF8 and RNF168, leading to the recruitment of repair proteins to sites of DNA damage. Ubiquitination at Lys-14 and Lys-16 (H2AK13Ub and H2AK15Ub, respectively) in response to DNA damage is initiated by RNF168 that mediates monoubiquitination at these 2 sites, and 'Lys-63'-linked ubiquitin are then conjugated to monoubiquitin; RNF8 is able to extend 'Lys-63'-linked ubiquitin chains in vitro. H2AK119Ub and ionizing radiation-induced 'Lys-63'-linked ubiquitination (H2AK13Ub and H2AK15Ub) are distinct events. Post-translationally, phosphorylation on Ser-2 (H2AS1ph) is enhanced during mitosis. Phosphorylation on Ser-2 by RPS6KA5/MSK1 directly represses transcription. Acetylation of H3 inhibits Ser-2 phosphorylation by RPS6KA5/MSK1. Phosphorylation at Thr-121 (H2AT120ph) by DCAF1 is present in the regulatory region of many tumor suppresor genes and down-regulates their transcription. In terms of processing, symmetric dimethylation on Arg-4 by the PRDM1/PRMT5 complex may play a crucial role in the germ-cell lineage. Glutamine methylation at Gln-105 (H2AQ104me) by FBL is specifically dedicated to polymerase I. It is present at 35S ribosomal DNA locus and impairs binding of the FACT complex. Post-translationally, crotonylation (Kcr) is specifically present in male germ cells and marks testis-specific genes in post-meiotic cells, including X-linked genes that escape sex chromosome inactivation in haploid cells. Crotonylation marks active promoters and enhancers and confers resistance to transcriptional repressors. It is also associated with post-meiotically activated genes on autosomes. In terms of processing, lactylated in macrophages by EP300/P300 by using lactoyl-CoA directly derived from endogenous or exogenous lactate, leading to stimulates gene transcription.

It localises to the nucleus. The protein resides in the chromosome. Core component of nucleosome. Nucleosomes wrap and compact DNA into chromatin, limiting DNA accessibility to the cellular machineries which require DNA as a template. Histones thereby play a central role in transcription regulation, DNA repair, DNA replication and chromosomal stability. DNA accessibility is regulated via a complex set of post-translational modifications of histones, also called histone code, and nucleosome remodeling. This chain is Histone H2A type 1, found in Bos taurus (Bovine).